The primary structure comprises 469 residues: Glutamate--tRNA ligase 2 (469 aa).

The 'HIGH' region signature appears at 10-20 (PSPTGFLHIGS). Positions 239–243 (KLSKR) match the 'KMSKS' region motif. Lysine 242 contacts ATP.

It belongs to the class-I aminoacyl-tRNA synthetase family. Glutamate--tRNA ligase type 1 subfamily. Monomer.

It localises to the cytoplasm. The enzyme catalyses tRNA(Glu) + L-glutamate + ATP = L-glutamyl-tRNA(Glu) + AMP + diphosphate. Catalyzes the attachment of glutamate to tRNA(Glu) in a two-step reaction: glutamate is first activated by ATP to form Glu-AMP and then transferred to the acceptor end of tRNA(Glu). This is Glutamate--tRNA ligase 2 from Rickettsia typhi (strain ATCC VR-144 / Wilmington).